A 1527-amino-acid chain; its full sequence is ATP-binding cassette sub-family C member 3 (1527 aa).

Residues 1-32 are Extracellular-facing; the sequence is MDALCGSGELGSKFWDSNLSVHTENPDLTPCF. Asn-18 carries an N-linked (GlcNAc...) asparagine glycan. The chain crosses the membrane as a helical span at residues 33–53; it reads QNSLLAWVPCIYLWVALPCYL. Residues 54-73 lie on the Cytoplasmic side of the membrane; it reads LYLRHHCRGYIILSHLSKLK. A helical transmembrane segment spans residues 74 to 94; the sequence is MVLGVLLWCVSWADLFYSFHG. The Extracellular portion of the chain corresponds to 95-99; that stretch reads LVHGR. Residues 100–120 traverse the membrane as a helical segment; sequence APAPVFFVTPLVVGVTMLLAT. Residues 121–132 are Cytoplasmic-facing; it reads LLIQYERLQGVQ. The chain crosses the membrane as a helical span at residues 133 to 153; that stretch reads SSGVLIIFWFLCVVCAIVPFR. Topologically, residues 154–171 are extracellular; that stretch reads SKILLAKAEGEISDPFRF. Residues 172–192 traverse the membrane as a helical segment; it reads TTFYIHFALVLSALILACFRE. Topologically, residues 193 to 302 are cytoplasmic; that stretch reads KPPFFSAKNV…RPRKPSFLKA (110 aa). The chain crosses the membrane as a helical span at residues 303–323; the sequence is LLATFGSSFLISACFKLIQDL. Residues 311-594 form the ABC transmembrane type-1 1 domain; it reads FLISACFKLI…LPQLISNLTQ (284 aa). Residues 324–349 lie on the Extracellular side of the membrane; sequence LSFINPQLLSILIRFISNPMAPSWWG. A helical transmembrane segment spans residues 350-370; that stretch reads FLVAGLMFLCSMMQSLILQHY. Residues 371–426 are Cytoplasmic-facing; the sequence is YHYIFVTGVKFRTGIMGVIYRKALVITNSVKRASTVGEIVNLMSVDAQRFMDLAPF. The helical transmembrane segment at 427-447 threads the bilayer; the sequence is LNLLWSAPLQIILAIYFLWQN. Residues 448–450 lie on the Extracellular side of the membrane; sequence LGP. The chain crosses the membrane as a helical span at residues 451-471; sequence SVLAGVAFMVLLIPLNGAVAV. The Cytoplasmic portion of the chain corresponds to 472–533; it reads KMRAFQVKQM…LLRTAAYLHT (62 aa). Residues 534–554 form a helical membrane-spanning segment; sequence TTTFTWMCSPFLVTLITLWVY. The Extracellular portion of the chain corresponds to 555–576; it reads VYVDPNNVLDAEKAFVSVSLFN. Residues 577–597 traverse the membrane as a helical segment; it reads ILRLPLNMLPQLISNLTQASV. Topologically, residues 598-963 are cytoplasmic; it reads SLKRIQQFLS…VELSVFWDYA (366 aa). The ABC transporter 1 domain maps to 629-851; sequence IHSGTFTWAQ…NGSFANFLCN (223 aa). 661–668 is a binding site for ATP; sequence GPVGCGKS. 2 positions are modified to phosphoserine: Ser-908 and Ser-911. Positions 910–932 are disordered; that stretch reads LSSDGEGQGRPVPRRHLGPSEKV. Residues 964 to 984 form a helical membrane-spanning segment; sequence KAVGLCTTLAICLLYVGQSAA. Positions 971 to 1252 constitute an ABC transmembrane type-1 2 domain; sequence TLAICLLYVG…MIRMMSDLES (282 aa). Topologically, residues 985-1021 are extracellular; the sequence is AIGANVWLSAWTNDAMADSRQNNTSLRLGVYAALGIL. Residues Asn-1006 and Asn-1007 are each glycosylated (N-linked (GlcNAc...) asparagine). Residues 1022–1042 form a helical membrane-spanning segment; the sequence is QGFLVMLAAMAMAAGGIQAAR. Residues 1043-1085 lie on the Cytoplasmic side of the membrane; it reads VLHQALLHNKIRSPQSFFDTTPSGRILNCFSKDIYVVDEVLAP. The helical transmembrane segment at 1086-1106 threads the bilayer; that stretch reads VILMLLNSFFNAISTLVVIMA. Position 1107 (Ser-1107) is a topological domain, extracellular. A helical membrane pass occupies residues 1108-1128; that stretch reads TPLFTVVILPLAVLYTLVQRF. The Cytoplasmic portion of the chain corresponds to 1129–1199; the sequence is YAATSRQLKR…ISNRWLSIGV (71 aa). Residues 1200–1220 traverse the membrane as a helical segment; that stretch reads EFVGNCVVLFAALFAVIGRSS. Residues 1221–1222 are Extracellular-facing; the sequence is LN. A helical transmembrane segment spans residues 1223–1243; that stretch reads PGLVGLSVSYSLQVTFALNWM. Residues 1244–1527 lie on the Cytoplasmic side of the membrane; that stretch reads IRMMSDLESN…YGMARDAGLA (284 aa). Positions 1291-1523 constitute an ABC transporter 2 domain; it reads FRNYSVRYRP…RGIFYGMARD (233 aa). ATP is bound at residue 1323–1330; the sequence is GRTGAGKS.

The protein belongs to the ABC transporter superfamily. ABCC family. Conjugate transporter (TC 3.A.1.208) subfamily. As to expression, mainly expressed in the liver. Also expressed in small intestine, colon, prostate, testis, brain and at a lower level in the kidney. In testis, localized to peritubular myoid cells, Leydig cells, along the basal membrane of Sertoli cells and moderately in the adluminal compartment of the seminiferous tubules.

It is found in the basolateral cell membrane. Its subcellular location is the basal cell membrane. It catalyses the reaction taurocholate(in) + ATP + H2O = taurocholate(out) + ADP + phosphate + H(+). It carries out the reaction glycocholate(in) + ATP + H2O = glycocholate(out) + ADP + phosphate + H(+). The enzyme catalyses taurolithocholate 3-sulfate(in) + ATP + H2O = taurolithocholate 3-sulfate(out) + ADP + phosphate + H(+). The catalysed reaction is taurochenodeoxycholate 3-sulfate(in) + ATP + H2O = taurochenodeoxycholate 3-sulfate(out) + ADP + phosphate + H(+). It catalyses the reaction an S-substituted glutathione(in) + ATP + H2O = an S-substituted glutathione(out) + ADP + phosphate + H(+). It carries out the reaction ATP + H2O + xenobioticSide 1 = ADP + phosphate + xenobioticSide 2.. The enzyme catalyses 17beta-estradiol 17-O-(beta-D-glucuronate)(in) + ATP + H2O = 17beta-estradiol 17-O-(beta-D-glucuronate)(out) + ADP + phosphate + H(+). The catalysed reaction is dehydroepiandrosterone 3-sulfate(in) + ATP + H2O = dehydroepiandrosterone 3-sulfate(out) + ADP + phosphate + H(+). It catalyses the reaction leukotriene C4(in) + ATP + H2O = leukotriene C4(out) + ADP + phosphate + H(+). It carries out the reaction (4Z,15Z)-bilirubin IXalpha C8-beta-D-glucuronoside(in) + ATP + H2O = (4Z,15Z)-bilirubin IXalpha C8-beta-D-glucuronoside(out) + ADP + phosphate + H(+). The enzyme catalyses (4Z,15Z)-bilirubin IXalpha C8,C12-beta-D-bisglucuronoside(in) + ATP + H2O = (4Z,15Z)-bilirubin IXalpha C8,C12-beta-D-bisglucuronoside(out) + ADP + phosphate + H(+). In terms of biological role, ATP-dependent transporter of the ATP-binding cassette (ABC) family that binds and hydrolyzes ATP to enable active transport of various substrates including many drugs, toxicants and endogenous compound across cell membranes. Transports glucuronide conjugates such as bilirubin diglucuronide, estradiol-17-beta-o-glucuronide and GSH conjugates such as leukotriene C4 (LTC4). Transports also various bile salts (taurocholate, glycocholate, taurochenodeoxycholate-3-sulfate, taurolithocholate- 3-sulfate). Does not contribute substantially to bile salt physiology but provides an alternative route for the export of bile acids and glucuronides from cholestatic hepatocytes. May contribute to regulate the transport of organic compounds in testes across the blood-testis-barrier. Can confer resistance to various anticancer drugs, methotrexate, tenoposide and etoposide, by decreasing accumulation of these drugs in cells. This chain is ATP-binding cassette sub-family C member 3, found in Homo sapiens (Human).